The chain runs to 405 residues: Probable glucan 1,3-beta-glucosidase A (405 aa).

The first 26 residues, 1 to 26 (MFPRISQAAILAHSLLAVCTSAATLA), serve as a signal peptide directing secretion. E198 serves as the catalytic Proton donor. 2 cysteine pairs are disulfide-bonded: C278–C403 and C304–C330. The Nucleophile role is filled by E296.

Belongs to the glycosyl hydrolase 5 (cellulase A) family. As to quaternary structure, monomer. Requires Mn(2+) as cofactor.

The protein localises to the secreted. It carries out the reaction Successive hydrolysis of beta-D-glucose units from the non-reducing ends of (1-&gt;3)-beta-D-glucans, releasing alpha-glucose.. In terms of biological role, beta-glucanases participate in the metabolism of beta-glucan, the main structural component of the cell wall. It could also function biosynthetically as a transglycosylase. This is Probable glucan 1,3-beta-glucosidase A (exgA) from Emericella nidulans (strain FGSC A4 / ATCC 38163 / CBS 112.46 / NRRL 194 / M139) (Aspergillus nidulans).